The sequence spans 207 residues: High frequency lysogenization protein HflD homolog (207 aa).

This sequence belongs to the HflD family.

It is found in the cytoplasm. The protein resides in the cell inner membrane. In Methylococcus capsulatus (strain ATCC 33009 / NCIMB 11132 / Bath), this protein is High frequency lysogenization protein HflD homolog.